The following is a 361-amino-acid chain: Phosphoserine aminotransferase (361 aa).

Arginine 42 is an L-glutamate binding site. Residues 76-77 (AT), tryptophan 102, threonine 152, aspartate 172, and glutamine 195 contribute to the pyridoxal 5'-phosphate site. Lysine 196 carries the N6-(pyridoxal phosphate)lysine modification. 237–238 (NT) contributes to the pyridoxal 5'-phosphate binding site.

This sequence belongs to the class-V pyridoxal-phosphate-dependent aminotransferase family. SerC subfamily. Homodimer. Pyridoxal 5'-phosphate is required as a cofactor.

The protein resides in the cytoplasm. The enzyme catalyses O-phospho-L-serine + 2-oxoglutarate = 3-phosphooxypyruvate + L-glutamate. It catalyses the reaction 4-(phosphooxy)-L-threonine + 2-oxoglutarate = (R)-3-hydroxy-2-oxo-4-phosphooxybutanoate + L-glutamate. It functions in the pathway amino-acid biosynthesis; L-serine biosynthesis; L-serine from 3-phospho-D-glycerate: step 2/3. It participates in cofactor biosynthesis; pyridoxine 5'-phosphate biosynthesis; pyridoxine 5'-phosphate from D-erythrose 4-phosphate: step 3/5. Functionally, catalyzes the reversible conversion of 3-phosphohydroxypyruvate to phosphoserine and of 3-hydroxy-2-oxo-4-phosphonooxybutanoate to phosphohydroxythreonine. This chain is Phosphoserine aminotransferase, found in Stenotrophomonas maltophilia (strain K279a).